We begin with the raw amino-acid sequence, 418 residues long: Protein FAM53A (418 aa).

2 disordered regions span residues 198–236 and 248–269; these read TSPV…FNPR and ETGN…LSRR. The span at 205–229 shows a compositional bias: low complexity; it reads SSASSGFVDSSEGSTSSSTRWNSGG. The segment covering 248–265 has biased composition (polar residues); it reads ETGNLLPSANSTPTSTPE. Residues 285-293 carry the Nuclear localization signal motif; sequence KKSRLKRRR.

It belongs to the FAM53 family.

The protein resides in the nucleus. Functionally, may play an important role in neural development; the dorsomedial roof of the third ventricle. The polypeptide is Protein FAM53A (Gallus gallus (Chicken)).